The primary structure comprises 179 residues: MAKLHDYYKSSVVAELTKQFGYTSVMQVPRIEKITLNMGVGDAINDKKLLENAAADMATISGQKPLITKARKSVAGFKIREGYPIGCKVTLRGERMWDFMERLISIALPRVRDFRGVNAKSFDGRGNYSMGVREQIIFPEIDFDKVDRVRGLDITITTSAGTDEEGRALLAAFNFPFRK.

This sequence belongs to the universal ribosomal protein uL5 family. In terms of assembly, part of the 50S ribosomal subunit; part of the 5S rRNA/L5/L18/L25 subcomplex. Contacts the 5S rRNA and the P site tRNA. Forms a bridge to the 30S subunit in the 70S ribosome.

Functionally, this is one of the proteins that bind and probably mediate the attachment of the 5S RNA into the large ribosomal subunit, where it forms part of the central protuberance. In the 70S ribosome it contacts protein S13 of the 30S subunit (bridge B1b), connecting the 2 subunits; this bridge is implicated in subunit movement. Contacts the P site tRNA; the 5S rRNA and some of its associated proteins might help stabilize positioning of ribosome-bound tRNAs. The chain is Large ribosomal subunit protein uL5 from Vibrio vulnificus (strain CMCP6).